Consider the following 148-residue polypeptide: SsrA-binding protein (148 aa).

Positions 129-148 are disordered; that stretch reads ETEKDRDWQREKARLMREKA.

The protein belongs to the SmpB family.

The protein localises to the cytoplasm. Its function is as follows. Required for rescue of stalled ribosomes mediated by trans-translation. Binds to transfer-messenger RNA (tmRNA), required for stable association of tmRNA with ribosomes. tmRNA and SmpB together mimic tRNA shape, replacing the anticodon stem-loop with SmpB. tmRNA is encoded by the ssrA gene; the 2 termini fold to resemble tRNA(Ala) and it encodes a 'tag peptide', a short internal open reading frame. During trans-translation Ala-aminoacylated tmRNA acts like a tRNA, entering the A-site of stalled ribosomes, displacing the stalled mRNA. The ribosome then switches to translate the ORF on the tmRNA; the nascent peptide is terminated with the 'tag peptide' encoded by the tmRNA and targeted for degradation. The ribosome is freed to recommence translation, which seems to be the essential function of trans-translation. The sequence is that of SsrA-binding protein from Ralstonia nicotianae (strain ATCC BAA-1114 / GMI1000) (Ralstonia solanacearum).